Here is a 276-residue protein sequence, read N- to C-terminus: Undecaprenyl-diphosphatase (276 aa).

7 helical membrane passes run 1 to 21, 39 to 59, 84 to 104, 115 to 135, 188 to 208, 222 to 242, and 253 to 273; these read MSWLQVVVLSVLQGLTEFLPV, AGASFTAVSQLGTEVAVLVYF, YWLGWWVIIGTIPISVVGLLF, LWLVATAMIVFSFVIAAAEYY, FGFLLAIPAVFASGLFSLPDA, QLFVSIVIAFVVGYAAVAWFL, and FVGYRIVLGTVVLVLLSAGVV.

It belongs to the UppP family.

Its subcellular location is the cell membrane. It carries out the reaction di-trans,octa-cis-undecaprenyl diphosphate + H2O = di-trans,octa-cis-undecaprenyl phosphate + phosphate + H(+). Functionally, catalyzes the dephosphorylation of undecaprenyl diphosphate (UPP). Confers resistance to bacitracin. This chain is Undecaprenyl-diphosphatase, found in Mycolicibacterium vanbaalenii (strain DSM 7251 / JCM 13017 / BCRC 16820 / KCTC 9966 / NRRL B-24157 / PYR-1) (Mycobacterium vanbaalenii).